The chain runs to 301 residues: Zinc finger protein 346 (301 aa).

2 Matrin-type zinc fingers span residues 55–85 and 117–141; these read SQCK…KVRR and KACS…GKVH. Residues Cys57, Cys60, His73, His79, Cys119, Cys122, His135, and His141 each contribute to the Zn(2+) site. Positions 151-177 are disordered; that stretch reads GSQTPALPQPEAQAKKDDGMQGPAEQD. 2 consecutive Matrin-type zinc fingers follow at residues 180–210 and 230–257; these read RFCS…HMNK and YPCT…HKNH. The disordered stretch occupies residues 250–283; it reads SGSKHKNHAKPKKGPNAFAPPPDNYQPDYQYPTN. A compositionally biased stretch (basic residues) spans 251–262; sequence GSKHKNHAKPKK.

The protein localises to the nucleus. The protein resides in the cytoplasm. Functionally, binds preferentially to dsRNA, but also to RNA-DNA hybrids. This Danio rerio (Zebrafish) protein is Zinc finger protein 346.